The chain runs to 269 residues: Imidazoleglycerol-phosphate dehydratase 3, chloroplastic (269 aa).

Residues 1–51 (MTTAPVVSPSLSRLHSAPASPFPKAPVGSGAGVAFPARPYGPSLRLRSAVM) constitute a chloroplast transit peptide. Residues Glu83, 109–117 (HMLDQLASH), 135–139 (HHSNE), Arg161, and Arg183 each bind substrate. His109, His135, His136, and Glu139 together coordinate Mn(2+). The Mn(2+) site is built by His207, His231, His232, and Glu235. Substrate is bound by residues 231-239 (HHIIEATFK) and 261-263 (SSK).

It belongs to the imidazoleglycerol-phosphate dehydratase family. Requires Mn(2+) as cofactor.

It localises to the plastid. Its subcellular location is the chloroplast. It carries out the reaction D-erythro-1-(imidazol-4-yl)glycerol 3-phosphate = 3-(imidazol-4-yl)-2-oxopropyl phosphate + H2O. It participates in amino-acid biosynthesis; L-histidine biosynthesis; L-histidine from 5-phospho-alpha-D-ribose 1-diphosphate: step 6/9. The polypeptide is Imidazoleglycerol-phosphate dehydratase 3, chloroplastic (Triticum aestivum (Wheat)).